The following is a 162-amino-acid chain: Anaerobic nitrite reductase GLB1 (162 aa).

One can recognise a Globin domain in the interval valine 9–lysine 159. A Homodimerization motif is present at residues glutamate 42–serine 46. Residues lysine 66, histidine 70, arginine 100, threonine 104, and histidine 105 each coordinate heme b. Positions aspartate 112–glutamate 124 match the Homodimerization motif.

Belongs to the plant globin family. Homodimer. The cofactor is heme b. As to expression, seeds and roots.

Its subcellular location is the cytoplasm. It localises to the nucleus. It carries out the reaction Fe(III)-heme b-[protein] + nitric oxide + H2O = Fe(II)-heme b-[protein] + nitrite + 2 H(+). In terms of biological role, phytoglobin that reduces nitrite to nitric oxide (NO) under anoxic conditions (e.g. during flooding or in waterlogged soil). May not function as an oxygen storage or transport protein. Has an unusually high affinity for O(2) through an hexacoordinate heme iron because of a very low dissociation constant. The chain is Anaerobic nitrite reductase GLB1 from Hordeum vulgare (Barley).